A 650-amino-acid chain; its full sequence is Chaperone protein DnaK (650 aa).

Phosphothreonine; by autocatalysis is present on T200. Residues 613–634 (QAGAAGAAGAAEGAAHAGGAQQ) form a disordered region.

It belongs to the heat shock protein 70 family.

Functionally, acts as a chaperone. The chain is Chaperone protein DnaK from Burkholderia vietnamiensis (strain G4 / LMG 22486) (Burkholderia cepacia (strain R1808)).